We begin with the raw amino-acid sequence, 333 residues long: Glycogenin-1 (333 aa).

An N-acetylthreonine modification is found at T2. Positions 9, 11, 12, and 15 each coordinate UDP. 4 residues coordinate UDP-alpha-D-glucose: L9, T11, N12, and Y15. A Phosphoserine; by PKA; in vitro modification is found at S44. A UDP-binding site is contributed by R77. Residues R77, K86, D102, A103, D104, N133, S134, D160, D163, and Q164 each contribute to the UDP-alpha-D-glucose site. Residues D102, A103, and D104 each contribute to the UDP site. D102 is a Mn(2+) binding site. D104 is a Mn(2+) binding site. Residue Y195 is glycosylated (O-linked (Glc...) tyrosine). H212, G215, and K218 together coordinate UDP. Residue H212 coordinates Mn(2+). 2 residues coordinate UDP-alpha-D-glucose: G215 and K218. Residues 284-316 (SHLSLGETPATTQPFVSSEERKERWEQGQADYM) are interaction with GYS1.

Belongs to the glycosyltransferase 8 family. Glycogenin subfamily. As to quaternary structure, part of the GYS1-GYG1 complex, a heterooctamer composed of a tetramer of GYS1 and 2 dimers of GYG1, where each GYS1 protomer binds to one GYG1 subunit (via GYG1 C-terminus); the GYS1 tetramer may dissociate from GYG1 dimers to continue glycogen polymerization on its own. May also form a heterooctamer complex with GYS2 (via GYG1 C-terminus). Mn(2+) is required as a cofactor. Self-glycosylated by the transfer of glucose residues from UDP-glucose to itself, forming an alpha-1,4-glycan of around 10 residues attached to Tyr-195. In terms of processing, phosphorylated. Detected in heart, skeletal muscle, brain and testis, and at lower levels in kidney.

It localises to the cytoplasm. The protein resides in the nucleus. It carries out the reaction L-tyrosyl-[glycogenin] + UDP-alpha-D-glucose = alpha-D-glucosyl-L-tyrosyl-[glycogenin] + UDP + H(+). The catalysed reaction is [1,4-alpha-D-glucosyl](n)-L-tyrosyl-[glycogenin] + UDP-alpha-D-glucose = [1,4-alpha-D-glucosyl](n+1)-L-tyrosyl-[glycogenin] + UDP + H(+). The protein operates within glycan biosynthesis; glycogen biosynthesis. In terms of biological role, glycogenin participates in the glycogen biosynthetic process along with glycogen synthase and glycogen branching enzyme. It catalyzes the formation of a short alpha (1,4)-glucosyl chain covalently attached via a glucose 1-O-tyrosyl linkage to internal tyrosine residues and these chains act as primers for the elongation reaction catalyzed by glycogen synthase. This is Glycogenin-1 (GYG1) from Oryctolagus cuniculus (Rabbit).